The chain runs to 245 residues: Acetylglutamate kinase (245 aa).

Substrate-binding positions include 41 to 42 (GG), Arg63, and Asn156.

This sequence belongs to the acetylglutamate kinase family. ArgB subfamily.

The protein localises to the cytoplasm. The catalysed reaction is N-acetyl-L-glutamate + ATP = N-acetyl-L-glutamyl 5-phosphate + ADP. The protein operates within amino-acid biosynthesis; L-arginine biosynthesis; N(2)-acetyl-L-ornithine from L-glutamate: step 2/4. Catalyzes the ATP-dependent phosphorylation of N-acetyl-L-glutamate. This chain is Acetylglutamate kinase, found in Streptococcus gordonii (strain Challis / ATCC 35105 / BCRC 15272 / CH1 / DL1 / V288).